A 339-amino-acid chain; its full sequence is MQSWATDGSVFFLGRSRPPLSPRAMIPAIFLMGPTASGKTELAVRLADALPIDIISVDSLLVYRHFDIGSAKPSLALRQQYPHALVDIREPDEPYSAGLFREDALHCIALARERGRIPLLVGGTGLYFRALECGIDTLPPANPALRQSLMALAETAGWPALHQRLATLDPEAAAGIAPHDRQRIQRALEIILGSGQTISGARHWQGTFPGPLYKIILRPPRSWLHQRITQRFDVMLNEGFLDEIADLSARHYAPELPAMRAVGYRQYFTWHDGLCSAAEAYQAALAATRQLAKRQDTWFKRESAHYYLDPSRDDASSLLLQMATRPRQGEVHSIGWDNG.

An ATP-binding site is contributed by 33 to 40 (GPTASGKT). 35–40 (TASGKT) provides a ligand contact to substrate. Interaction with substrate tRNA regions lie at residues 58–61 (DSLL) and 182–186 (QRIQR).

The protein belongs to the IPP transferase family. As to quaternary structure, monomer. It depends on Mg(2+) as a cofactor.

It carries out the reaction adenosine(37) in tRNA + dimethylallyl diphosphate = N(6)-dimethylallyladenosine(37) in tRNA + diphosphate. Catalyzes the transfer of a dimethylallyl group onto the adenine at position 37 in tRNAs that read codons beginning with uridine, leading to the formation of N6-(dimethylallyl)adenosine (i(6)A). The protein is tRNA dimethylallyltransferase of Acidithiobacillus ferrooxidans (strain ATCC 23270 / DSM 14882 / CIP 104768 / NCIMB 8455) (Ferrobacillus ferrooxidans (strain ATCC 23270)).